A 209-amino-acid chain; its full sequence is MITLLNLLLAEIAGFITYQHFTASPLRYFIPYPAELLLFAIPLVGLAVRRPFSFYYYSVLIFFNISPILARSETFEGIIDTLNAIDALYNTGTSAIAESLKVAFIGHSTSVDGLLAVTWLYILAEVFQGNWESIKGAKTGGVEIERAYLVYLPAFFFALLVYFLYPFLMSEIDFGLERIVAAVLGIAAFFAGVYLLSRGVEEEDINSGG.

A run of 3 helical transmembrane segments spans residues 26-48 (LRYFIPYPAELLLFAIPLVGLAV), 147-169 (AYLVYLPAFFFALLVYFLYPFLM), and 179-196 (IVAAVLGIAAFFAGVYLL).

It localises to the cell membrane. This is an uncharacterized protein from Archaeoglobus fulgidus (strain ATCC 49558 / DSM 4304 / JCM 9628 / NBRC 100126 / VC-16).